We begin with the raw amino-acid sequence, 171 residues long: Small ribosomal subunit protein uS5 (171 aa).

The region spanning Leu-12–Val-75 is the S5 DRBM domain.

The protein belongs to the universal ribosomal protein uS5 family. In terms of assembly, part of the 30S ribosomal subunit. Contacts proteins S4 and S8.

Functionally, with S4 and S12 plays an important role in translational accuracy. In terms of biological role, located at the back of the 30S subunit body where it stabilizes the conformation of the head with respect to the body. The sequence is that of Small ribosomal subunit protein uS5 from Buchnera aphidicola subsp. Baizongia pistaciae (strain Bp).